The primary structure comprises 144 residues: uncharacterized protein (144 aa).

Transmembrane regions (helical) follow at residues 7-29 (FPAS…RDLV), 51-73 (VAIG…FLLV), 85-107 (AVLA…VGAF), and 122-139 (HLHH…LIFV).

It localises to the cell membrane. This is an uncharacterized protein from Treponema pallidum (strain Nichols).